Reading from the N-terminus, the 249-residue chain is Proteasome subunit alpha type-3 (249 aa).

Residue Ser-2 is modified to N-acetylserine. 2 positions are modified to O-acetylserine: Ser-214 and Ser-220. Lys-221 is covalently cross-linked (Glycyl lysine isopeptide (Lys-Gly) (interchain with G-Cter in ubiquitin)).

It belongs to the peptidase T1A family. In terms of assembly, component of the 20S core complex of the 26S proteasome. The 26S proteasome is composed of a core protease (CP), known as the 20S proteasome, capped at one or both ends by the 19S regulatory particle (RP/PA700). The 20S proteasome core is composed of 28 subunits that are arranged in four stacked rings, resulting in a barrel-shaped structure. The two end rings are each formed by seven alpha subunits, and the two central rings are each formed by seven beta subunits. The catalytic chamber with the active sites is on the inside of the barrel. In terms of tissue distribution, ubiquitous low levels.

It is found in the cytoplasm. The protein localises to the nucleus. The proteasome is a multicatalytic proteinase complex which is characterized by its ability to cleave peptides with Arg, Phe, Tyr, Leu, and Glu adjacent to the leaving group at neutral or slightly basic pH. The proteasome has an ATP-dependent proteolytic activity. In Arabidopsis thaliana (Mouse-ear cress), this protein is Proteasome subunit alpha type-3 (PAG1).